The primary structure comprises 167 residues: uncharacterized protein (167 aa).

The chain crosses the membrane as a helical span at residues 39 to 59 (LSLFSLSPLFLLLSISSLIFS). The stretch at 92-122 (LGTQIEMITQAMTTLESRVTDLQQESNDHRT) forms a coiled coil. The interval 134–167 (RDLGDENRPKPTTNKMIATGEQHKGEVSTSLFHD) is disordered. Basic and acidic residues predominate over residues 154-167 (EQHKGEVSTSLFHD).

The protein localises to the mitochondrion membrane. This is an uncharacterized protein from Arabidopsis thaliana (Mouse-ear cress).